Reading from the N-terminus, the 265-residue chain is U6 snRNA phosphodiesterase 1 (265 aa).

Positions 1 to 72 (MSAAPLVGYS…DSTKHGGRVR (72 aa)) are disordered. A compositionally biased stretch (basic and acidic residues) spans 20 to 31 (DGMRTRPGDGSH). The Proton acceptor role is filled by His120. An AMP-binding site is contributed by 120 to 122 (HLS). Residues Gln164, Tyr202, and 206–210 (SFHLS) contribute to the UMP site. Residues Tyr202 and 204 to 210 (DPSFHLS) each bind AMP. His208 serves as the catalytic Proton donor.

This sequence belongs to the 2H phosphoesterase superfamily. USB1 family. As to quaternary structure, interacts with PLRG1, CDC5L and PRPF19.

Its subcellular location is the nucleus. The catalysed reaction is a 3'-end uridylyl-uridine-RNA = a 3'-end 2',3'-cyclophospho-uridine-RNA + uridine. The enzyme catalyses a 3'-end uridylyl-adenosine-RNA = a 3'-end 2',3'-cyclophospho-uridine-RNA + adenosine. With respect to regulation, 3'-5' RNA exonuclease activity is inhibited by a 3' phosphate terminated RNA. Its function is as follows. 3'-5' RNA exonuclease that trims the 3' end of oligo(U) and oligo(A) tracts of the pre-U6 small nuclear RNA (snRNA) molecule, leading to the formation of a mature U6 snRNA 3' end-terminated with a 2',3'-cyclic phosphate. Participates in the U6 snRNA 3' end processing that prevents U6 snRNA degradation. In addition also removes uridines from the 3' end of U6atac snRNA and possibly the vault RNA VTRNA1-1. The sequence is that of U6 snRNA phosphodiesterase 1 from Homo sapiens (Human).